Here is a 161-residue protein sequence, read N- to C-terminus: Protein-export protein SecB (161 aa).

The protein belongs to the SecB family. Homotetramer, a dimer of dimers. One homotetramer interacts with 1 SecA dimer.

It is found in the cytoplasm. One of the proteins required for the normal export of preproteins out of the cell cytoplasm. It is a molecular chaperone that binds to a subset of precursor proteins, maintaining them in a translocation-competent state. It also specifically binds to its receptor SecA. The chain is Protein-export protein SecB from Shewanella sp. (strain ANA-3).